Here is an 82-residue protein sequence, read N- to C-terminus: Toxin Tpa7 (82 aa).

The first 20 residues, 1–20 (MKGMILLISCLMLIEVVVEC), serve as a signal peptide directing secretion. Residues 21–82 (KEGYPLDTLN…KIWDLKKNKC (62 aa)) form the LCN-type CS-alpha/beta domain. 4 cysteine pairs are disulfide-bonded: Cys32/Cys82, Cys36/Cys58, Cys44/Cys63, and Cys48/Cys65.

It belongs to the long (4 C-C) scorpion toxin superfamily. Sodium channel inhibitor family. Beta subfamily. In terms of tissue distribution, expressed by the venom gland.

The protein resides in the secreted. Beta toxins bind voltage-independently at site-4 of sodium channels (Nav) and shift the voltage of activation toward more negative potentials thereby affecting sodium channel activation and promoting spontaneous and repetitive firing. This Tityus pachyurus (Colombian scorpion) protein is Toxin Tpa7.